Here is a 271-residue protein sequence, read N- to C-terminus: MSRELIRTADAWNKVKIARDPNRPNAKFYINEIFDEFIELHGDRNFGDDKAIIGGIALLNNLSFTVIGICKGENTKENIKRNFGMPHPEGYRKALRLMKQAEKFKRPVICFVDTPGAFCGIGAEERGQGQAIAQNLVELMGLKVPVISIVIGEGGSGGALALAVADKVFMLEHSIYSVLSPEGFASILWKDSSRAEEAASVMKITAQDLKSFNIIDKIIKEPRGGAHKNPIKMAQNIKKTILEALGEMKGTDLDTLLNERYNKYRNIENNL.

The 247-residue stretch at 1–247 (MSRELIRTAD…KKTILEALGE (247 aa)) folds into the CoA carboxyltransferase C-terminal domain.

This sequence belongs to the AccA family. As to quaternary structure, acetyl-CoA carboxylase is a heterohexamer composed of biotin carboxyl carrier protein (AccB), biotin carboxylase (AccC) and two subunits each of ACCase subunit alpha (AccA) and ACCase subunit beta (AccD).

The protein resides in the cytoplasm. It catalyses the reaction N(6)-carboxybiotinyl-L-lysyl-[protein] + acetyl-CoA = N(6)-biotinyl-L-lysyl-[protein] + malonyl-CoA. Its pathway is lipid metabolism; malonyl-CoA biosynthesis; malonyl-CoA from acetyl-CoA: step 1/1. Functionally, component of the acetyl coenzyme A carboxylase (ACC) complex. First, biotin carboxylase catalyzes the carboxylation of biotin on its carrier protein (BCCP) and then the CO(2) group is transferred by the carboxyltransferase to acetyl-CoA to form malonyl-CoA. This is Acetyl-coenzyme A carboxylase carboxyl transferase subunit alpha from Clostridium perfringens (strain ATCC 13124 / DSM 756 / JCM 1290 / NCIMB 6125 / NCTC 8237 / Type A).